Reading from the N-terminus, the 424-residue chain is 23S rRNA (uracil(1939)-C(5))-methyltransferase RlmD (424 aa).

The TRAM domain occupies M1–E56. 4 residues coordinate [4Fe-4S] cluster: C69, C75, C78, and C155. S-adenosyl-L-methionine-binding residues include Q255, F284, N289, E305, D333, and D354. Residue C380 is the Nucleophile of the active site.

The protein belongs to the class I-like SAM-binding methyltransferase superfamily. RNA M5U methyltransferase family. RlmD subfamily.

It carries out the reaction uridine(1939) in 23S rRNA + S-adenosyl-L-methionine = 5-methyluridine(1939) in 23S rRNA + S-adenosyl-L-homocysteine + H(+). Its function is as follows. Catalyzes the formation of 5-methyl-uridine at position 1939 (m5U1939) in 23S rRNA. In Dichelobacter nodosus (strain VCS1703A), this protein is 23S rRNA (uracil(1939)-C(5))-methyltransferase RlmD.